Consider the following 459-residue polypeptide: uncharacterized protein (459 aa).

A TRAM domain is found at 9–67; that stretch reads KLEVGQTFPVTIKRLGINGEGVGYFKRQVVFIPGALPGEEVVAETTKIQRGFAEAKVKK. 4 residues coordinate [4Fe-4S] cluster: Cys80, Cys86, Cys89, and Cys168. 4 residues coordinate S-adenosyl-L-methionine: Gln292, Tyr321, Asp342, and Asp390. Cys417 acts as the Nucleophile in catalysis.

This sequence belongs to the class I-like SAM-binding methyltransferase superfamily. RNA M5U methyltransferase family.

This is an uncharacterized protein from Bacillus cereus (strain ATCC 10987 / NRS 248).